Reading from the N-terminus, the 142-residue chain is Hemoglobin subunit alpha (142 aa).

The region spanning 2–142 (VLSPADKTNI…VSTVLTSKYR (141 aa)) is the Globin domain. Residue Ser-4 is modified to Phosphoserine. N6-succinyllysine is present on Lys-8. Residue Thr-9 is modified to Phosphothreonine. N6-succinyllysine is present on Lys-12. Lys-17 carries the N6-acetyllysine; alternate modification. Residue Lys-17 is modified to N6-succinyllysine; alternate. Phosphotyrosine is present on Tyr-25. Ser-36 is subject to Phosphoserine. Lys-41 is modified (N6-succinyllysine). Phosphoserine is present on Ser-50. His-59 is an O2 binding site. His-88 contacts heme b. Position 103 is a phosphoserine (Ser-103). Thr-109 is modified (phosphothreonine). At Ser-125 the chain carries Phosphoserine. Residues Thr-135 and Thr-138 each carry the phosphothreonine modification. Ser-139 is modified (phosphoserine).

Belongs to the globin family. In terms of assembly, heterotetramer of two alpha chains and two beta chains. In terms of tissue distribution, red blood cells.

Its function is as follows. Involved in oxygen transport from the lung to the various peripheral tissues. Hemopressin acts as an antagonist peptide of the cannabinoid receptor CNR1. Hemopressin-binding efficiently blocks cannabinoid receptor CNR1 and subsequent signaling. The sequence is that of Hemoglobin subunit alpha (HBA) from Canis latrans (Coyote).